The sequence spans 676 residues: Intraflagellar transport protein 81 homolog (676 aa).

Position 2 is an N-acetylserine (serine 2). Positions 2–121 (SDQIKFIMDS…LKKRAYLARF (120 aa)) are CH (calponin-homology)-like region. Threonine 61 bears the Phosphothreonine mark. Coiled-coil stretches lie at residues 132-258 (LQDE…ADAK), 306-389 (HSDL…FDGT), 416-456 (QIIA…KGIS), and 490-622 (VKKL…REKQ).

This sequence belongs to the IFT81 family. In terms of assembly, component of the IFT complex B, at least composed of IFT20, IFT22, IFT25, IFT27, IFT46, IFT52, TRAF3IP1/IFT54, IFT57, IFT74, IFT80, IFT81, and IFT88. Interacts with IFT74; the interaction is direct: within the IFT complex B, IFT74 and IFT81 mediate the transport of tubulin within the cilium. Interacts with tubulin; the interaction is direct. Interacts with IFT57 and IFT70B. Interacts with RABL2/RABL2A; binding is equal in the presence of GTP or GDP. Interacts with IFT88. Interacts (via the IFT74/IFT81 heterodimer) with RABL2B. Interacts with CFAP61. As to expression, highly expressed in testis, moderately in ovary, heart, liver, skeletal muscle, kidney and pancreas, low in prostate, brain, placenta and lung and not detected in spleen, thymus, small intestine and colon. Isoform CDV-1R is abundantly expressed in testis.

The protein localises to the cell projection. It localises to the cilium. Its subcellular location is the cytoplasm. The protein resides in the cytoskeleton. It is found in the cilium basal body. Component of the intraflagellar transport (IFT) complex B: together with IFT74, forms a tubulin-binding module that specifically mediates transport of tubulin within the cilium. Binds tubulin via its CH (calponin-homology)-like region. Required for ciliogenesis. Required for proper regulation of SHH signaling. Plays an important role during spermatogenesis by modulating the assembly and elongation of the sperm flagella. This Homo sapiens (Human) protein is Intraflagellar transport protein 81 homolog (IFT81).